The chain runs to 332 residues: ADP-L-glycero-D-manno-heptose-6-epimerase (332 aa).

Residues 10–11, 31–32, lysine 38, lysine 53, 75–79, and asparagine 92 contribute to the NADP(+) site; these read MI, DK, and MGACS. The active-site Proton acceptor is tyrosine 145. Lysine 149 contacts NADP(+). Asparagine 173 is a binding site for substrate. Valine 174 and lysine 182 together coordinate NADP(+). The active-site Proton acceptor is the lysine 182. Substrate contacts are provided by residues arginine 184, histidine 191, 205–208, arginine 219, and tyrosine 290; that span reads FKSY.

This sequence belongs to the NAD(P)-dependent epimerase/dehydratase family. HldD subfamily. In terms of assembly, homopentamer. NADP(+) is required as a cofactor.

The enzyme catalyses ADP-D-glycero-beta-D-manno-heptose = ADP-L-glycero-beta-D-manno-heptose. Its pathway is nucleotide-sugar biosynthesis; ADP-L-glycero-beta-D-manno-heptose biosynthesis; ADP-L-glycero-beta-D-manno-heptose from D-glycero-beta-D-manno-heptose 7-phosphate: step 4/4. In terms of biological role, catalyzes the interconversion between ADP-D-glycero-beta-D-manno-heptose and ADP-L-glycero-beta-D-manno-heptose via an epimerization at carbon 6 of the heptose. In Fusobacterium nucleatum subsp. nucleatum (strain ATCC 25586 / DSM 15643 / BCRC 10681 / CIP 101130 / JCM 8532 / KCTC 2640 / LMG 13131 / VPI 4355), this protein is ADP-L-glycero-D-manno-heptose-6-epimerase.